A 506-amino-acid chain; its full sequence is uncharacterized protein (506 aa).

The protein belongs to the Mg-chelatase subunits D/I family. ComM subfamily.

This is an uncharacterized protein from Salmonella typhimurium (strain LT2 / SGSC1412 / ATCC 700720).